A 392-amino-acid chain; its full sequence is Probable protein phosphatase 2C 22 (392 aa).

The segment at 1–26 (MEETRGISDPENGSSSYGGKPPNPLS) is disordered. Residues 89–356 (RSGAWSDIGS…DNVTAVVVCL (268 aa)) form the PPM-type phosphatase domain. The Mn(2+) site is built by Asp133, Gly134, Asp304, and Asp347.

This sequence belongs to the PP2C family. Mg(2+) serves as cofactor. The cofactor is Mn(2+).

It catalyses the reaction O-phospho-L-seryl-[protein] + H2O = L-seryl-[protein] + phosphate. The catalysed reaction is O-phospho-L-threonyl-[protein] + H2O = L-threonyl-[protein] + phosphate. In Arabidopsis thaliana (Mouse-ear cress), this protein is Probable protein phosphatase 2C 22.